The chain runs to 225 residues: Large ribosomal subunit protein uL1 (225 aa).

The protein belongs to the universal ribosomal protein uL1 family. As to quaternary structure, part of the 50S ribosomal subunit.

In terms of biological role, binds directly to 23S rRNA. The L1 stalk is quite mobile in the ribosome, and is involved in E site tRNA release. Protein L1 is also a translational repressor protein, it controls the translation of the L11 operon by binding to its mRNA. The protein is Large ribosomal subunit protein uL1 of Rhodopirellula baltica (strain DSM 10527 / NCIMB 13988 / SH1).